Reading from the N-terminus, the 1716-residue chain is Histone-lysine N-methyltransferase SETD1A (1716 aa).

The interval 60 to 89 (LQDPRCHVRSKARDFSLPVPKFKLDEFYIG) is interaction with WDR82. In terms of domain architecture, RRM spans 84–172 (DEFYIGQIPL…NIIHAQLDIK (89 aa)). Disordered stretches follow at residues 194-367 (PTGG…SSYP), 380-499 (TSYP…AQHS), 516-670 (FSFL…PPPH), 849-869 (AKPF…EKMK), 911-1206 (KRKE…SRKV), 1230-1259 (EEVA…GTEV), and 1275-1297 (GLAT…AERP). Low complexity predominate over residues 222–231 (SDTAAYPAGT). Residues 243 to 277 (CSQDTNFSSSRQDTPSSFGQFTPQSSQGTPYTSRG) are compositionally biased toward polar residues. Low complexity-rich tracts occupy residues 278–295 (STPY…TSTS) and 315–357 (STSS…SSAS). The segment covering 430–440 (SEAPPPEPPEP) has biased composition (pro residues). Residues 441-461 (GGGGGGSGGGGGGGGGGGGGA) are compositionally biased toward gly residues. A Phosphoserine modification is found at serine 477. Over residues 477 to 487 (SPARSGSPAPE) the composition is skewed to low complexity. Residues 488–499 (TTNESVPFAQHS) show a composition bias toward polar residues. Serine 521 and serine 578 each carry phosphoserine. Positions 581–591 (ANGQNQASPCS) are enriched in polar residues. 2 stretches are compositionally biased toward pro residues: residues 606 to 631 (SPPP…PPPY) and 638 to 670 (GYPP…PPPH). A compositionally biased stretch (basic and acidic residues) spans 859-869 (QAKEEDKEKMK). Serine 930 carries the phosphoserine modification. Acidic residues-rich tracts occupy residues 991-1009 (KDED…EEAV) and 1018-1027 (ASDGEDEDSD). Residues 1028–1071 (SSSQCSLYADSDGENGSTSDSESGSSSSSSSSSSSSSSSSSSES) show a composition bias toward low complexity. Residue serine 1110 is modified to Phosphoserine. The span at 1130–1150 (EEPPPSVPQPPAEPPAGPPDA) shows a compositional bias: pro residues. Positions 1283-1292 (DDSEATETSD) are enriched in acidic residues. An HCFC1-binding motif (HBM) motif is present at residues 1307 to 1311 (EHNYA). 2 disordered regions span residues 1355–1427 (EEPK…FEPR) and 1480–1508 (TNLS…SEGY). Residues 1369–1383 (EGEEEEEDEEEESES) show a composition bias toward acidic residues. Positions 1399–1412 (RRRSLRSHTRRRRP) are enriched in basic residues. Pro residues predominate over residues 1413 to 1424 (PLPPPPPPPPSF). An interaction with CFP1 region spans residues 1424–1459 (FEPRSEFEQMTILYDIWNSGLDLEDMSYLRLTYERL). The interaction with ASH2L, RBBP5 and WDR5 stretch occupies residues 1459 to 1546 (LLQQTSGADW…GTNRVLSERR (88 aa)). The WDR5 interaction motif (WIN) signature appears at 1501 to 1506 (GSARSE). Residues 1546-1551 (RSEQRR) carry the RxxxRR motif motif. One can recognise an SET domain in the interval 1577 to 1694 (KKLRFGRSRI…VDEEITYDYK (118 aa)). Tyrosine 1693 provides a ligand contact to S-adenosyl-L-methionine. In terms of domain architecture, Post-SET spans 1700 to 1716 (NKIPCLCGTESCRGSLN).

The protein belongs to the class V-like SAM-binding methyltransferase superfamily. Component of the SET1A/COMPASS complex composed of the catalytic subunit SETD1A, WDR5, WDR82, RBBP5, ASH2L/ASH2, CXXC1/CFP1, HCFC1 and DPY30 homotrimer. Forms a core complex with the evolutionary conserved subcomplex WRAD composed of WDR5, RBBP5, ASH2L/ASH2 and DPY30 subunits; WRAD differentially stimulates the methyltransferase activity. Interacts with BOD1L1 (via COMPASS-Shg1 domain) at replication forks. Interacts with HCFC1. Interacts with ASH2/ASH2L. Interacts with CXXC1/CFP1. Interacts with RBBP5. Interacts (via N-terminal region) with WDR82; the interaction is direct. Interacts (via the RRM domain) with hyperphosphorylated C-terminal domain (CTD) of RNA polymerase II large subunit (POLR2A) only in the presence of WDR82. Binds specifically to CTD heptad repeats phosphorylated on 'Ser-5' of each heptad. Interacts with ZNF335. Interacts with SUPT6H. Interacts with NAP1L1. Interacts (via WIN motif) with WDR5.

It localises to the nucleus. It is found in the nucleus speckle. Its subcellular location is the chromosome. The protein resides in the cytoplasm. The catalysed reaction is L-lysyl(4)-[histone H3] + S-adenosyl-L-methionine = N(6)-methyl-L-lysyl(4)-[histone H3] + S-adenosyl-L-homocysteine + H(+). The enzyme catalyses N(6)-methyl-L-lysyl(4)-[histone H3] + S-adenosyl-L-methionine = N(6),N(6)-dimethyl-L-lysyl(4)-[histone H3] + S-adenosyl-L-homocysteine + H(+). It carries out the reaction N(6),N(6)-dimethyl-L-lysyl(4)-[histone H3] + S-adenosyl-L-methionine = N(6),N(6),N(6)-trimethyl-L-lysyl(4)-[histone H3] + S-adenosyl-L-homocysteine + H(+). Histone methyltransferase that catalyzes methyl group transfer from S-adenosyl-L-methionine to the epsilon-amino group of 'Lys-4' of histone H3 (H3K4) via a non-processive mechanism. Part of chromatin remodeling machinery, forms H3K4me1, H3K4me2 and H3K4me3 methylation marks at active chromatin sites where transcription and DNA repair take place. Responsible for H3K4me3 enriched promoters and transcriptional programming of inner mass stem cells and neuron progenitors during embryogenesis. Required for H3K4me1 mark at stalled replication forks. Mediates FANCD2-dependent nucleosome remodeling and RAD51 nucleofilaments stabilization at reversed forks, protecting them from nucleolytic degradation. Does not methylate 'Lys-4' of histone H3 if the neighboring 'Lys-9' residue is already methylated. Has RNA binding activity towards transcripts involved in RNA processing and the DNA damage response. The polypeptide is Histone-lysine N-methyltransferase SETD1A (Setd1a) (Mus musculus (Mouse)).